The chain runs to 105 residues: Sec-independent protein translocase protein TatA (105 aa).

The chain crosses the membrane as a helical span at residues M1–A21. A compositionally biased stretch (basic and acidic residues) spans E41–D50. A disordered region spans residues E41–S105. A compositionally biased stretch (low complexity) spans P52–P92. Residues Q96–S105 are compositionally biased toward basic and acidic residues.

The protein belongs to the TatA/E family. The Tat system comprises two distinct complexes: a TatABC complex, containing multiple copies of TatA, TatB and TatC subunits, and a separate TatA complex, containing only TatA subunits. Substrates initially bind to the TatABC complex, which probably triggers association of the separate TatA complex to form the active translocon.

The protein localises to the cell membrane. Its function is as follows. Part of the twin-arginine translocation (Tat) system that transports large folded proteins containing a characteristic twin-arginine motif in their signal peptide across membranes. TatA could form the protein-conducting channel of the Tat system. The protein is Sec-independent protein translocase protein TatA of Corynebacterium glutamicum (strain ATCC 13032 / DSM 20300 / JCM 1318 / BCRC 11384 / CCUG 27702 / LMG 3730 / NBRC 12168 / NCIMB 10025 / NRRL B-2784 / 534).